Consider the following 401-residue polypeptide: Ufm1-specific protease 2 (401 aa).

Catalysis depends on residues C234, D358, and H360.

The protein belongs to the peptidase C78 family.

The protein localises to the endoplasmic reticulum. Its subcellular location is the cytoplasm. The protein resides in the nucleus. Functionally, thiol-dependent isopeptidase that specifically cleaves UFM1, a ubiquitin-like modifier protein, from conjugated proteins. While it is also able to mediate the processing of UFM1 precursors, a prerequisite for conjugation reactions, ufsp2 mainly acts as a protein deUFMylase that mediates deconjugation of UFM1 from target proteins. The polypeptide is Ufm1-specific protease 2 (Danio rerio (Zebrafish)).